The primary structure comprises 175 residues: Large ribosomal subunit protein uL10 (175 aa).

This sequence belongs to the universal ribosomal protein uL10 family. In terms of assembly, part of the ribosomal stalk of the 50S ribosomal subunit. The N-terminus interacts with L11 and the large rRNA to form the base of the stalk. The C-terminus forms an elongated spine to which L12 dimers bind in a sequential fashion forming a multimeric L10(L12)X complex.

Forms part of the ribosomal stalk, playing a central role in the interaction of the ribosome with GTP-bound translation factors. The sequence is that of Large ribosomal subunit protein uL10 from Methylococcus capsulatus (strain ATCC 33009 / NCIMB 11132 / Bath).